A 642-amino-acid polypeptide reads, in one-letter code: Threonine--tRNA ligase (642 aa).

One can recognise a TGS domain in the interval 1–61 (MPVITLPDGS…ETDAELSIIT (61 aa)). Positions 243 to 534 (DHRKIGKQLD…LIEEYAGRFP (292 aa)) are catalytic. Cysteine 334, histidine 385, and histidine 511 together coordinate Zn(2+).

Belongs to the class-II aminoacyl-tRNA synthetase family. In terms of assembly, homodimer. Requires Zn(2+) as cofactor.

The protein resides in the cytoplasm. The catalysed reaction is tRNA(Thr) + L-threonine + ATP = L-threonyl-tRNA(Thr) + AMP + diphosphate + H(+). Functionally, catalyzes the attachment of threonine to tRNA(Thr) in a two-step reaction: L-threonine is first activated by ATP to form Thr-AMP and then transferred to the acceptor end of tRNA(Thr). Also edits incorrectly charged L-seryl-tRNA(Thr). The chain is Threonine--tRNA ligase from Shewanella sp. (strain MR-7).